We begin with the raw amino-acid sequence, 221 residues long: uncharacterized protein (221 aa).

The signal sequence occupies residues 1–26 (MVRLVPRAFAATVALLAAGFSPATAS).

This is an uncharacterized protein from Mycobacterium tuberculosis (strain CDC 1551 / Oshkosh).